We begin with the raw amino-acid sequence, 427 residues long: MSTSFENKATNRGVITFTISQDKIKPALDQAFNKIKKDLNAPGFRKGHMPRPVFDQRFGEEVLYEEALNIVLPAAYEGAVAELELDVVAQPKIDVVSMEKCQEWTLTAEVVTKPEVKLGDYKDLTVEVEASKEVTDEEVDAKVERERNNLAELVVKEEAAVEGDTVVIDFVGSVDGVEFDGGKGDNFSLELGSGQFIPGFEEQLVGAKAGDTVEVNVTFPENYQAEDLAGKAAKFVATVHEVKAKEVPELDDELAKDIDEEVETLDELKAKYRKELEASKEAAYDDALEGAAIELAVENAEIVELPEEMVHDEVHRSVNEFMASMQRQGISPDMYFQLTGTSQEDLHKQHEAEADKRVKTNLVIEAIAKAEGFEASDDEIEKEINDLAAEYSMPVEQVRSLLSADMLKHDIVMKKAVEVITSSAKAK.

Residues 163-248 form the PPIase FKBP-type domain; sequence GDTVVIDFVG…VHEVKAKEVP (86 aa).

It belongs to the FKBP-type PPIase family. Tig subfamily.

It localises to the cytoplasm. The catalysed reaction is [protein]-peptidylproline (omega=180) = [protein]-peptidylproline (omega=0). Involved in protein export. Acts as a chaperone by maintaining the newly synthesized protein in an open conformation. Functions as a peptidyl-prolyl cis-trans isomerase. This is Trigger factor from Streptococcus equi subsp. equi (strain 4047).